A 315-amino-acid polypeptide reads, in one-letter code: Uracil-DNA glycosylase (315 aa).

Residues 35 to 80 (AAAAAPAGAGAGASKPARPPAAARPAKGTPAASAATTATGADASAP) show a composition bias toward low complexity. Residues 35–88 (AAAAAPAGAGAGASKPARPPAAARPAKGTPAASAATTATGADASAPAPDPGAPT) form a disordered region. Aspartate 158 (proton acceptor) is an active-site residue.

It belongs to the uracil-DNA glycosylase (UDG) superfamily. UNG family.

The protein localises to the host nucleus. The catalysed reaction is Hydrolyzes single-stranded DNA or mismatched double-stranded DNA and polynucleotides, releasing free uracil.. Excises uracil residues from the DNA which can arise as a result of misincorporation of dUMP residues by DNA polymerase or deamination of cytosines. Therefore may reduce deleterious uracil incorporation into the viral genome, particularly in terminally differentiated cells which lack DNA repair enzymes. In Suid herpesvirus 1 (strain Indiana-Funkhauser / Becker) (SuHV-1), this protein is Uracil-DNA glycosylase (UL2).